A 449-amino-acid polypeptide reads, in one-letter code: Hyaluronidase (449 aa).

The signal sequence occupies residues 1 to 23 (MYHLWIKCLAAWIFLKRFNGVHV). 2 disulfide bridges follow: Cys-47–Cys-340 and Cys-211–Cys-227. N-linked (GlcNAc...) asparagine glycosylation is found at Asn-67 and Asn-103. The active-site Proton donor is the Glu-135. Asn-153 carries N-linked (GlcNAc...) asparagine glycosylation. A glycan (N-linked (GlcNAc...) asparagine) is linked at Asn-357. Cystine bridges form between Cys-365-Cys-376, Cys-370-Cys-427, and Cys-429-Cys-438. A glycan (N-linked (GlcNAc...) asparagine) is linked at Asn-401. Residues 427-438 (CQCYQGWQGLYC) form the EGF-like domain.

It belongs to the glycosyl hydrolase 56 family. In terms of assembly, monomer. In terms of tissue distribution, expressed by the venom gland.

It localises to the secreted. It carries out the reaction Random hydrolysis of (1-&gt;4)-linkages between N-acetyl-beta-D-glucosamine and D-glucuronate residues in hyaluronate.. Its function is as follows. Snake venom endo-hyaluronidase that degrades hyaluronan to smaller oligosaccharide fragments. In venom, it is not toxic by itself, but increases the diffusion of other venom proteins by degrading the extracellular matrix. In addition, it displays antiedematogenic activity. The chain is Hyaluronidase from Echis ocellatus (Ocellated saw-scaled viper).